The following is a 606-amino-acid chain: Putative amino acid transporter AAT1 (606 aa).

The tract at residues Met1–Arg156 is disordered. 2 stretches are compositionally biased toward basic and acidic residues: residues His12–Asn25 and Ser72–Lys89. Residues Ser140 to Glu149 show a composition bias toward acidic residues. The next 11 helical transmembrane spans lie at Thr175–Phe194, Ile200–Leu225, Thr246–Leu271, Leu283–Ile301, Phe313–Thr332, His352–Phe372, Val393–Leu412, Val428–Phe449, Met522–Val539, Val545–Tyr567, and Arg579–Ile605.

Belongs to the amino acid/polyamine transporter 2 family.

It localises to the vacuole membrane. Putative amino acid transporter. Probably transports tryptophan. Involved in maintaining the osmotic homeostasis of the digestive vacuole. Important for the timely development and growth of the asexual-stage parasites and male gametocyte maturation. This chain is Putative amino acid transporter AAT1, found in Plasmodium falciparum (isolate 3D7).